Here is a 372-residue protein sequence, read N- to C-terminus: Probable O-methyltransferase 2 (372 aa).

S-adenosyl-L-methionine contacts are provided by G216, D259, and K273. H277 (proton acceptor) is an active-site residue.

Belongs to the class I-like SAM-binding methyltransferase superfamily. Cation-independent O-methyltransferase family. COMT subfamily. In terms of assembly, homodimer. In terms of tissue distribution, expressed predominantly in root hairs.

O-methyltransferase of unknown substrate specificity. Not active on resorcinol, orcinol, guaiacol, eugenol, ferulic acid, p-coumaric acid, catechol, caffeic acid or monomethyl ethers of resorcinol or orcinol. The chain is Probable O-methyltransferase 2 (OMT2) from Sorghum bicolor (Sorghum).